The primary structure comprises 448 residues: Trigger factor (448 aa).

The PPIase FKBP-type domain occupies 172 to 257 (GDRVTVDFVG…MKKIEWPHLP (86 aa)).

Belongs to the FKBP-type PPIase family. Tig subfamily.

Its subcellular location is the cytoplasm. The enzyme catalyses [protein]-peptidylproline (omega=180) = [protein]-peptidylproline (omega=0). Its function is as follows. Involved in protein export. Acts as a chaperone by maintaining the newly synthesized protein in an open conformation. Functions as a peptidyl-prolyl cis-trans isomerase. This Burkholderia cenocepacia (strain ATCC BAA-245 / DSM 16553 / LMG 16656 / NCTC 13227 / J2315 / CF5610) (Burkholderia cepacia (strain J2315)) protein is Trigger factor.